Consider the following 785-residue polypeptide: Phenylalanine--tRNA ligase beta subunit (785 aa).

The tRNA-binding domain occupies 39–147 (FPIPRGVVFA…DALPPGTPLA (109 aa)). The B5 domain maps to 399–474 (KPPEAIPFRP…RIQGYETIPL (76 aa)). Residues Asp-452, Asp-458, Glu-461, and Glu-462 each contribute to the Mg(2+) site. In terms of domain architecture, FDX-ACB spans 688–780 (SRHPAAFRDL…ALRARGFGLR (93 aa)).

Belongs to the phenylalanyl-tRNA synthetase beta subunit family. Type 1 subfamily. Tetramer of two alpha and two beta subunits. Mg(2+) is required as a cofactor.

Its subcellular location is the cytoplasm. The catalysed reaction is tRNA(Phe) + L-phenylalanine + ATP = L-phenylalanyl-tRNA(Phe) + AMP + diphosphate + H(+). This chain is Phenylalanine--tRNA ligase beta subunit, found in Thermus thermophilus (strain ATCC BAA-163 / DSM 7039 / HB27).